The sequence spans 195 residues: Probable nicotinate-nucleotide adenylyltransferase (195 aa).

This sequence belongs to the NadD family.

The catalysed reaction is nicotinate beta-D-ribonucleotide + ATP + H(+) = deamido-NAD(+) + diphosphate. It participates in cofactor biosynthesis; NAD(+) biosynthesis; deamido-NAD(+) from nicotinate D-ribonucleotide: step 1/1. Functionally, catalyzes the reversible adenylation of nicotinate mononucleotide (NaMN) to nicotinic acid adenine dinucleotide (NaAD). This chain is Probable nicotinate-nucleotide adenylyltransferase, found in Gluconobacter oxydans (strain 621H) (Gluconobacter suboxydans).